Here is a 386-residue protein sequence, read N- to C-terminus: Methylthioribose-1-phosphate isomerase (386 aa).

Aspartate 258 acts as the Proton donor in catalysis.

Belongs to the eIF-2B alpha/beta/delta subunits family. MtnA subfamily.

The protein resides in the cytoplasm. Its subcellular location is the nucleus. It catalyses the reaction 5-(methylsulfanyl)-alpha-D-ribose 1-phosphate = 5-(methylsulfanyl)-D-ribulose 1-phosphate. It participates in amino-acid biosynthesis; L-methionine biosynthesis via salvage pathway; L-methionine from S-methyl-5-thio-alpha-D-ribose 1-phosphate: step 1/6. Its function is as follows. Catalyzes the interconversion of methylthioribose-1-phosphate (MTR-1-P) into methylthioribulose-1-phosphate (MTRu-1-P). The sequence is that of Methylthioribose-1-phosphate isomerase from Uncinocarpus reesii (strain UAMH 1704).